The sequence spans 388 residues: Diacylglycerol O-acyltransferase 2 (388 aa).

Residues 1-69 (MKTLIAAYSG…NRSKVEKQLQ (69 aa)) are Cytoplasmic-facing. Positions 16–40 (RQAEADRSQRSHGGPALSREGSGRW) are disordered. The chain crosses the membrane as a helical span at residues 70–88 (VISVLQWVLSFLVLGVACS). The Lumenal segment spans residues 89–92 (AILM). A helical membrane pass occupies residues 93-112 (YIFCTDCWLIAVLYFTWLVF). Topologically, residues 113 to 388 (DWNTPKKGGR…LPETEVLEVN (276 aa)) are cytoplasmic.

The protein belongs to the diacylglycerol acyltransferase family. As to quaternary structure, forms multimeric complexes consisting of several DGAT2 subunits. Interacts with SLC27A1 and this interaction is enhanced in the presence of ZFYVE1. Predominantly expressed in liver and white adipose tissue. Expressed at lower level in mammary gland, testis and peripheral blood leukocytes. Expressed in sebaceous glands of normal skin but decreased psoriatic skin.

The protein localises to the endoplasmic reticulum membrane. It is found in the lipid droplet. The protein resides in the cytoplasm. Its subcellular location is the perinuclear region. The enzyme catalyses an acyl-CoA + a 1,2-diacyl-sn-glycerol = a triacyl-sn-glycerol + CoA. It carries out the reaction all-trans-retinol + an acyl-CoA = an all-trans-retinyl ester + CoA. The catalysed reaction is 2-(9Z-octadecenoyl)-glycerol + (9Z)-octadecenoyl-CoA = 1,2-di-(9Z-octadecenoyl)-sn-glycerol + CoA. It catalyses the reaction 1,2-di-(9Z-octadecenoyl)-sn-glycerol + (9Z)-octadecenoyl-CoA = 1,2,3-tri-(9Z-octadecenoyl)-glycerol + CoA. The enzyme catalyses all-trans-retinol + hexadecanoyl-CoA = all-trans-retinyl hexadecanoate + CoA. It carries out the reaction 1-O-(9Z-octadecenyl)-glycerol + (9Z)-octadecenoyl-CoA = 1-O-(9Z-octadecyl)-3-(9Z-octadecenoyl)-glycerol + CoA. The catalysed reaction is 1-(9Z-octadecenoyl)-glycerol + (9Z)-octadecenoyl-CoA = 1,2-di-(9Z-octadecenoyl)-glycerol + CoA. It catalyses the reaction 1,2-di-(9Z-octadecenoyl)-sn-glycerol + hexadecanoyl-CoA = 1,2-di-(9Z)-octadecenoyl-3-hexadecanoyl-sn-glycerol + CoA. The enzyme catalyses 1,3-di-(9Z-octadecenoyl)-glycerol + (9Z)-octadecenoyl-CoA = 1,2,3-tri-(9Z-octadecenoyl)-glycerol + CoA. It carries out the reaction 2,3-di-(9Z)-octadecenoyl-sn-glycerol + (9Z)-octadecenoyl-CoA = 1,2,3-tri-(9Z-octadecenoyl)-glycerol + CoA. The catalysed reaction is 2-(9Z-octadecenoyl)-glycerol + hexadecanoyl-CoA = 1-hexadecanoyl-2-(9Z-octadecenoyl)-sn-glycerol + CoA. The protein operates within glycerolipid metabolism; triacylglycerol biosynthesis. Inhibited by niacin. Functionally, essential acyltransferase that catalyzes the terminal and only committed step in triacylglycerol synthesis by using diacylglycerol and fatty acyl CoA as substrates. Required for synthesis and storage of intracellular triglycerides. Probably plays a central role in cytosolic lipid accumulation. In liver, is primarily responsible for incorporating endogenously synthesized fatty acids into triglycerides. Also functions as an acyl-CoA retinol acyltransferase (ARAT). Also able to use 1-monoalkylglycerol (1-MAkG) as an acyl acceptor for the synthesis of monoalkyl-monoacylglycerol (MAMAG). The protein is Diacylglycerol O-acyltransferase 2 of Homo sapiens (Human).